A 254-amino-acid polypeptide reads, in one-letter code: MSKIRILVGVKRTLDYMLKPRINATKTAVDLSGQKMSINPFCDIAVEEAIRMKETLKNRIEDTLVVTAGQTSSEPILRQCLAKGIGRAALINVGEKELEPLSVAKLLKATVEKEKSNLVLLGKQAIDDDAHQTGGMLAAMLGWPQFTSASKVRIEGDKVIVTREIDGGEETLSSTLPAIITTDLRLNVPRFANLAKVMKARKAPLGKMSPEDLGVTIDQRLQTVSVSEPVQKRQNIMVKSVDEMVKTLKELGAL.

Belongs to the ETF beta-subunit/FixA family. As to quaternary structure, heterodimer of an alpha and a beta subunit. Requires FAD as cofactor. AMP serves as cofactor.

The protein localises to the mitochondrion matrix. In terms of biological role, the electron transfer flavoprotein serves as a specific electron acceptor for several dehydrogenases, including five acyl-CoA dehydrogenases, glutaryl-CoA and sarcosine dehydrogenase. It transfers the electrons to the main mitochondrial respiratory chain via ETF-ubiquinone oxidoreductase (ETF dehydrogenase). The protein is Probable electron transfer flavoprotein subunit beta of Schizosaccharomyces pombe (strain 972 / ATCC 24843) (Fission yeast).